We begin with the raw amino-acid sequence, 628 residues long: CMP-5'-(3-aminopropyl)phosphonate synthase (628 aa).

Residues 1–255 (MNENRTFATP…DPGDQRQADF (255 aa)) form a mobA-like NTP transferase region. Residues 278 to 628 (GVTDHALLYN…TTEGAGRADG (351 aa)) form a decarboxylase region. Lys466 is subject to N6-(pyridoxal phosphate)lysine.

It in the N-terminal section; belongs to the MobA family. This sequence in the C-terminal section; belongs to the class-I pyridoxal-phosphate-dependent aminotransferase family. The cofactor is Mg(2+). Pyridoxal 5'-phosphate is required as a cofactor.

The catalysed reaction is 2-amino-4-phosphonobutanoate + CTP = CMP-5'-(3-amino-3-carboxypropyl)phosphonate + diphosphate. It catalyses the reaction CMP-5'-(3-amino-3-carboxypropyl)phosphonate + H(+) = CMP-5'-(3-aminopropyl)phosphonate + CO2. It functions in the pathway antibiotic biosynthesis. Functionally, bifunctional cytidylyltransferase/decarboxylase involved in the biosynthesis of the phosphonate antibiotic FR-900098, a potent antimalarial agent that acts as an inhibitor of 1-deoxy-D-xylulose 5-phosphate reductoisomerase (DXR), the first enzyme in the nonmevalonate pathway for isoprenoid biosynthesis. Catalyzes the condensation of 2-amino-4-phosphonobutyrate (2APn) and CTP to form CMP-5'-2APn and then decarboxylates CMP-5'-2APn to yield CMP-5'-(3-aminopropyl)phosphonate (CMP-5'-3APn). The chain is CMP-5'-(3-aminopropyl)phosphonate synthase from Streptomyces rubellomurinus (strain ATCC 31215).